The sequence spans 318 residues: Gamma-glutamyl hydrolase (318 aa).

Residues 1–24 (MARLGRLLSVLGLVLCGATGLGLS) form the signal peptide. The region spanning 25-318 (APPAPTPKKP…SSFQQSYIFD (294 aa)) is the Gamma-glutamyl hydrolase domain. Asparagine 116 is a glycosylation site (N-linked (GlcNAc...) asparagine). The active-site Nucleophile is the cysteine 134. N-linked (GlcNAc...) asparagine glycans are attached at residues asparagine 163 and asparagine 203. Residue histidine 244 is the Proton donor of the active site. The N-linked (GlcNAc...) asparagine glycan is linked to asparagine 307.

It belongs to the peptidase C26 family. As to quaternary structure, homodimer.

The protein localises to the secreted. It localises to the extracellular space. It is found in the lysosome. The protein resides in the melanosome. The enzyme catalyses (6S)-5,6,7,8-tetrahydrofolyl-(gamma-L-Glu)(n) + (n-1) H2O = (6S)-5,6,7,8-tetrahydrofolate + (n-1) L-glutamate. In terms of biological role, hydrolyzes the polyglutamate sidechains of pteroylpolyglutamates. Progressively removes gamma-glutamyl residues from pteroylpoly-gamma-glutamate to yield pteroyl-alpha-glutamate (folic acid) and free glutamate. May play an important role in the bioavailability of dietary pteroylpolyglutamates and in the metabolism of pteroylpolyglutamates and antifolates. Exhibits either endo- or exopeptidase activity depending upon the tissue of origin. When secreted, it acts primarily as an endopeptidase. This is Gamma-glutamyl hydrolase (GGH) from Bos taurus (Bovine).